Reading from the N-terminus, the 393-residue chain is MNQGTPHIVLAGGGTAGHVNPLLAVAGAIRDIEPTAQVTVIGTAVGLEKDLVPEAGYELDTIEKVPFPRRPNLYMLRFPAKWKRETAKVRSILETRHADVVAGFGGYASAPVYATAHKMGIPIAIHEQNARAGMANKLGARWADFIGTVYEGTGLKPRAGADVERVGLPLRPAIASLTKRIGDDRAAVRRESAAQLGVDPNRPLVLVTGGSLGAQSLNRAIASSAADLLAHAQIIHLTGRGKISEVRELVTASAGADVLTGIGPESAGQGDYHTAEYLERIDLAFACADLVICRAGAGSVSELAALGLPAIYVPLPIGNGEQRFNAEPVVNAGGGLLVADKDLTPQWVHEHVPDLLADHERLAEFGRKAWEYGIRNAAEIMARHVLQLAEPSK.

UDP-N-acetyl-alpha-D-glucosamine-binding positions include Thr15–Gly17, Asn129, Arg171, Ser211, and Gln322.

This sequence belongs to the glycosyltransferase 28 family. MurG subfamily.

It is found in the cell membrane. It carries out the reaction di-trans,octa-cis-undecaprenyl diphospho-N-acetyl-alpha-D-muramoyl-L-alanyl-D-glutamyl-meso-2,6-diaminopimeloyl-D-alanyl-D-alanine + UDP-N-acetyl-alpha-D-glucosamine = di-trans,octa-cis-undecaprenyl diphospho-[N-acetyl-alpha-D-glucosaminyl-(1-&gt;4)]-N-acetyl-alpha-D-muramoyl-L-alanyl-D-glutamyl-meso-2,6-diaminopimeloyl-D-alanyl-D-alanine + UDP + H(+). Its pathway is cell wall biogenesis; peptidoglycan biosynthesis. In terms of biological role, cell wall formation. Catalyzes the transfer of a GlcNAc subunit on undecaprenyl-pyrophosphoryl-MurNAc-pentapeptide (lipid intermediate I) to form undecaprenyl-pyrophosphoryl-MurNAc-(pentapeptide)GlcNAc (lipid intermediate II). This Bifidobacterium longum (strain DJO10A) protein is UDP-N-acetylglucosamine--N-acetylmuramyl-(pentapeptide) pyrophosphoryl-undecaprenol N-acetylglucosamine transferase.